Reading from the N-terminus, the 283-residue chain is Non-selective voltage-gated ion channel VDAC3 (283 aa).

C2 carries the post-translational modification N-acetylcysteine. T4 is modified (phosphothreonine). K12, K15, and K20 each carry N6-acetyllysine. 2 beta stranded membrane passes run 26 to 35 and 39 to 47; these read MVKIDLRTKS and VEFSTSGHA. A Glycyl lysine isopeptide (Lys-Gly) (interchain with G-Cter in ubiquitin) cross-link involves residue K53. Transmembrane regions (beta stranded) follow at residues 54–64, 69–76, and 80–89; these read ASGNLETKYKI, LTFTQKWN, and TLGTEISLEN. K90 bears the N6-acetyllysine mark. The beta stranded transmembrane segment at 95–104 threads the bilayer; it reads LKLTLDTIFV. Residues K109 and K110 each participate in a glycyl lysine isopeptide (Lys-Gly) (interchain with G-Cter in ubiquitin) cross-link. A run of 10 beta stranded transmembrane segments spans residues 111-120, 123-130, 137-145, 150-158, 163-175, 178-185, 189-198, 202-211, 218-227, and 231-238; these read SGKLKASYKR, FSIGSNVD, TIYGWAVLA, LAGYQMSFD, KLSQNNFALGYKA, FQLHTHVN, EFGGSIYQKV, IETSINLAWT, RFGIAAKYKL, and TSLSAKVN. Position 241 is a phosphoserine (S241). NAD(+) is bound by residues 242 to 244 and 260 to 264; these read LIG and SALID. Beta stranded transmembrane passes span 242–251 and 254–263; these read LIGLGYTQTL and GVKLTLSALI. Position 266 is an N6-acetyllysine; alternate (K266). A Glycyl lysine isopeptide (Lys-Gly) (interchain with G-Cter in ubiquitin); alternate cross-link involves residue K266. Residues 273–282 traverse the membrane as a beta stranded segment; that stretch reads HKVGLGFELE.

The protein belongs to the eukaryotic mitochondrial porin family. Interacts with ARMC12 in a TBC1D21-dependent manner. Interacts with MISFA. In terms of processing, ubiquitinated by PRKN during mitophagy, leading to its degradation and enhancement of mitophagy. Deubiquitinated by USP30.

It is found in the mitochondrion outer membrane. The protein localises to the membrane. It catalyses the reaction chloride(in) = chloride(out). The enzyme catalyses K(+)(in) = K(+)(out). Functionally, non-selective voltage-gated ion channel that mediates the transport of anions and cations through the mitochondrion outer membrane and plasma membrane. Forms a high-conducting channel with a stable open state and a voltage-induced closure with a mild preference for anions over cations. Involved in male fertility and sperm mitochondrial sheath formation. This is Non-selective voltage-gated ion channel VDAC3 from Sus scrofa (Pig).